A 976-amino-acid polypeptide reads, in one-letter code: Apical junction component 1 homolog (976 aa).

The segment at 21–49 (ATPGPASKCSPCERSVARPAEPAPFNKRH) is disordered. Position 52 is a phosphoserine (S52). Disordered regions lie at residues 61–136 (GPAM…EPAY), 220–242 (PQFH…PTPS), and 264–294 (YAER…RGSF). The segment covering 98 to 113 (RAPPGLTPAPASPPVL) has biased composition (pro residues). Basic and acidic residues predominate over residues 116–134 (RGREAQRAARAEASPRREP). At S129 the chain carries Phosphoserine. R322 carries the omega-N-methylarginine modification. The segment at 412-443 (LQVVPPSDPDPLLASWHGGTGTSPPRLATDSR) is disordered. S468, S509, and S512 each carry phosphoserine. Disordered regions lie at residues 539-574 (DLRA…SGRQ) and 614-660 (LDSR…ADED). Low complexity-rich tracts occupy residues 616–625 (SRPAGSGAPA) and 633–655 (PASA…SPEP). R749 carries the asymmetric dimethylarginine; alternate modification. R749 is subject to Omega-N-methylarginine; alternate. Positions 855-888 (GSPARPPPARSREPDMETLILTPPPGTAGLDQDG) are disordered.

Its subcellular location is the apical cell membrane. The protein resides in the cell projection. The protein localises to the cilium. It localises to the cell junction. It is found in the adherens junction. Its function is as follows. May be involved in the control of adherens junction integrity. This Homo sapiens (Human) protein is Apical junction component 1 homolog.